A 150-amino-acid chain; its full sequence is MQVILLDKIANLGGLGDQVVVKSGFARNFLFPQGKAVPATKANIETFDARRAELEAKIADQLVAAQARADKLEALAEVTLVSKAGDEGKLFGSIGTRDIADAISAVGVEVAKSEVRLPLGTIRETGEFDVSIAVHSEVTATIKVIVIAEA.

Belongs to the bacterial ribosomal protein bL9 family.

Functionally, binds to the 23S rRNA. The protein is Large ribosomal subunit protein bL9 of Pseudoalteromonas translucida (strain TAC 125).